Reading from the N-terminus, the 781-residue chain is Sialidase (781 aa).

A signal peptide spans 1–24; the sequence is MRFKNVKKTALMLAMFGMATSSNA. Position 224 (R224) interacts with substrate. The Proton acceptor role is filled by D250. BNR repeat units lie at residues 263–274 and 585–596; these read RTSRDGGITWDT and IYSDDGGSNWQT. The active site involves E619. R635 is a binding site for substrate. One copy of the BNR 3 repeat lies at 653 to 664; sequence FLSKDGGITWSL. Residue R712 participates in substrate binding. The stretch at 718–729 is one BNR 4 repeat; sequence WFSFDEGVTWKG. Y740 acts as the Nucleophile in catalysis.

This sequence belongs to the glycosyl hydrolase 33 family. In terms of assembly, monomer. The cofactor is Ca(2+).

The protein localises to the secreted. It carries out the reaction Hydrolysis of alpha-(2-&gt;3)-, alpha-(2-&gt;6)-, alpha-(2-&gt;8)- glycosidic linkages of terminal sialic acid residues in oligosaccharides, glycoproteins, glycolipids, colominic acid and synthetic substrates.. Cleaves the terminal sialic acid (N-acetyl neuraminic acid) from carbohydrate chains in glycoproteins providing free sialic acid which can be used as carbon and energy sources. Sialidases have been suggested to be pathogenic factors in microbial infections. Facilitates cholera toxin binding to host intestinal epithelial cells by converting cell surface polysialogangliosides to GM1 monogangliosides. The polypeptide is Sialidase (nanH) (Vibrio cholerae serotype O1 (strain ATCC 39541 / Classical Ogawa 395 / O395)).